Reading from the N-terminus, the 348-residue chain is sn-glycerol-3-phosphate import ATP-binding protein UgpC 3 (348 aa).

Positions 4-234 (INIVDVKKNY…PASLFVAGFI (231 aa)) constitute an ABC transporter domain. 36-43 (GPSGCGKS) serves as a coordination point for ATP.

The protein belongs to the ABC transporter superfamily. sn-glycerol-3-phosphate importer (TC 3.A.1.1.3) family. As to quaternary structure, the complex is composed of two ATP-binding proteins (UgpC), two transmembrane proteins (UgpA and UgpE) and a solute-binding protein (UgpB).

The protein localises to the cell inner membrane. The catalysed reaction is sn-glycerol 3-phosphate(out) + ATP + H2O = sn-glycerol 3-phosphate(in) + ADP + phosphate + H(+). Functionally, part of the ABC transporter complex UgpBAEC involved in sn-glycerol-3-phosphate (G3P) import. Responsible for energy coupling to the transport system. The sequence is that of sn-glycerol-3-phosphate import ATP-binding protein UgpC 3 from Rhizobium etli (strain ATCC 51251 / DSM 11541 / JCM 21823 / NBRC 15573 / CFN 42).